The sequence spans 655 residues: A-type voltage-gated potassium channel KCND3 (655 aa).

Over 1-182 (MAAGVAAWLP…FENPHTSTLA (182 aa)) the chain is Cytoplasmic. Residues 6–21 (AAWLPFARAAAIGWMP) are interaction with KCNIP1 and KCNIP2. An interaction with KCNIP1 region spans residues 70 to 78 (EKEFFFNED). 4 residues coordinate Zn(2+): histidine 104, cysteine 110, cysteine 131, and cysteine 132. The residue at position 153 (serine 153) is a Phosphoserine. The chain crosses the membrane as a helical span at residues 183–204 (LVFYYVTGFFIAVSVITNVVET). Topologically, residues 205–223 (VPCGTVPGSKELPCGERYS) are extracellular. Residues 224-246 (VAFFCLDTACVMIFTVEYLLRLF) form a helical membrane-spanning segment. The Cytoplasmic portion of the chain corresponds to 247–253 (AAPSRYR). A helical transmembrane segment spans residues 254-277 (FIRSVMSIIDVVAIMPYYIGLVMT). Residues 278–283 (NNEDVS) are Extracellular-facing. The helical; Voltage-sensor transmembrane segment at 284 to 306 (GAFVTLRVFRVFRIFKFSRHSQG) threads the bilayer. The Cytoplasmic segment spans residues 307-318 (LRILGYTLKSCA). The helical transmembrane segment at 319-343 (SELGFLLFSLTMAIIIFATVMFYAE) threads the bilayer. The Extracellular portion of the chain corresponds to 344-352 (KGSSASKFT). Residues 353–366 (SIPASFWYTIVTMT) constitute an intramembrane region (helical). Threonine 367, leucine 368, glycine 369, and tyrosine 370 together coordinate K(+). The short motif at 367 to 372 (TLGYGD) is the Selectivity filter element. The stretch at 367–374 (TLGYGDMV) is an intramembrane region. The helical transmembrane segment at 378 to 400 (IAGKIFGSICSLSGVLVIALPVP) threads the bilayer. Residues 401–655 (VIVSNFSRIY…ASNVVKVSAL (255 aa)) lie on the Cytoplasmic side of the membrane. Threonine 459 bears the Phosphothreonine mark. The tract at residues 470–487 (SLIESQHHHLLHCLEKTT) is interaction with KCNIP1 and KCNIP2. Residues 472-487 (IESQHHHLLHCLEKTT) are mediates dendritic targeting. Over residues 525–548 (MQNYPSTRSPSLSSHPGLTTTCCS) the composition is skewed to polar residues. The segment at 525 to 565 (MQNYPSTRSPSLSSHPGLTTTCCSRRSKKTTHLPNSNLPAT) is disordered. Serine 569 is modified (phosphoserine; by CaMK2D). Residue serine 585 is modified to Phosphoserine. The segment at 615 to 655 (ISIPTPPALTPEGESRPPPASPGPNTNIPSIASNVVKVSAL) is disordered. Polar residues predominate over residues 637–647 (GPNTNIPSIAS).

The protein belongs to the potassium channel family. D (Shal) (TC 1.A.1.2) subfamily. Kv4.3/KCND3 sub-subfamily. In terms of assembly, homotetramer. Heterotetramer with KCND2. Associates with the regulatory subunits KCNIP3 and KCNIP4. Interacts with KCNE1, KCNE2, SCN1B and KCNAB1 and DLG1. Component of heteromultimeric potassium channels. Identified in potassium channel complexes containing KCND1, KCND2, KCND3, KCNIP1, KCNIP2, KCNIP3, KCNIP4, DPP6 and DPP10. Interacts with KCNIP1; each KCNIP1 monomer interacts with two adjacent KCND3 subunits, through both the N-terminal inactivation ball of a KCND3 subunit and a C-terminal helix from the adjacent KCND3 subunit, clamping them together; this interaction stabilizes the tetrameric form and modulates the channel gating kinetics namely channel activation and inactivation kinetics and rate of recovery from inactivation. Interacts with DPP6; this interaction modulates the channel gating kinetics namely channel activation and inactivation kinetics and rate of recovery from inactivation. Interacts with KCNIP2; each KCNIP2 monomer interacts with two adjacent KCND3 subunits, through both the N-terminal inactivation ball of a KCND3 subunit and a C-terminal helix from the adjacent KCND3 subunit, clamping them together; this interaction modulates the channel gating kinetics. In terms of processing, regulated through phosphorylation at Ser-569 by CaMK2D. In terms of tissue distribution, highly expressed in heart and brain, in particular in cortex, cerebellum, amygdala and caudate nucleus. Detected at lower levels in liver, skeletal muscle, kidney and pancreas.

The protein resides in the cell membrane. It is found in the sarcolemma. It localises to the cell projection. The protein localises to the dendrite. The enzyme catalyses K(+)(in) = K(+)(out). In terms of biological role, pore-forming (alpha) subunit of voltage-gated A-type potassium channels that mediates transmembrane potassium transport in excitable membranes, in brain and heart. In cardiomyocytes, may generate the transient outward potassium current I(To). In neurons, may conduct the transient subthreshold somatodendritic A-type potassium current (ISA). Kinetics properties are characterized by fast activation at subthreshold membrane potentials, rapid inactivation, and quick recovery from inactivation. Channel properties are modulated by interactions with regulatory subunits. Interaction with the regulatory subunits KCNIP1 or KCNIP2 modulates the channel gating kinetics namely channel activation and inactivation kinetics and rate of recovery from inactivation. Likewise, interaction with DPP6 modulates the channel gating kinetics namely channel activation and inactivation kinetics. This is A-type voltage-gated potassium channel KCND3 (KCND3) from Homo sapiens (Human).